The following is a 91-amino-acid chain: Small ribosomal subunit protein uS19 (91 aa).

The protein belongs to the universal ribosomal protein uS19 family.

Functionally, protein S19 forms a complex with S13 that binds strongly to the 16S ribosomal RNA. The protein is Small ribosomal subunit protein uS19 of Sphingopyxis alaskensis (strain DSM 13593 / LMG 18877 / RB2256) (Sphingomonas alaskensis).